The chain runs to 950 residues: Coiled-coil domain-containing protein 80 (950 aa).

The signal sequence occupies residues 1–21; sequence MTWRMGPRFTMLLAMWLVCGS. 3 disordered regions span residues 28–64, 88–119, and 289–609; these read TIRGSHGGRKVPLVSPDSSRPARFLRHTGRSRGIERS, PTEPPARSDINGAAVRPEQRPAARGSPREMIR, and QVVA…QSPK. Basic and acidic residues-rich tracts occupy residues 104–119 and 308–317; these read PEQRPAARGSPREMIR and SEKKKEDPRR. Low complexity predominate over residues 348–374; it reads PRATTLPPAPATTVTRSTSRAVTVAAR. Residues 376 to 385 are compositionally biased toward polar residues; it reads MTTTAFPTTQ. Residues 418-428 show a composition bias toward basic and acidic residues; it reads SRKDQHRERPQ. The segment covering 435-454 has biased composition (polar residues); the sequence is KATSLESFTNAPPTTISEPS. 3 stretches are compositionally biased toward basic and acidic residues: residues 462–478, 487–499, and 538–582; these read RFRDNRMDRREHGHRDP, PAKEKPPKKKAQD, and KKHE…EKEK. Residues Lys545 and Lys548 each participate in a glycyl lysine isopeptide (Lys-Gly) (interchain with G-Cter in SUMO2) cross-link. Residues 560-587 adopt a coiled-coil conformation; that stretch reads DKLLKSEKQMKKSEKKSKQEKEKSKKKK. The segment covering 598–609 has biased composition (polar residues); that stretch reads KPTNKHFTQSPK.

This sequence belongs to the CCDC80 family. Binds to various extracellular matrix proteins. Phosphorylated. In terms of tissue distribution, expressed in dermal papilla and dermal fibroblasts (at protein level). Expressed in heart, thymus, placenta, pancreas, colon, epithelium, spleen and osteoblasts.

Its subcellular location is the secreted. It is found in the extracellular space. The protein localises to the extracellular matrix. Its function is as follows. Promotes cell adhesion and matrix assembly. This Homo sapiens (Human) protein is Coiled-coil domain-containing protein 80 (CCDC80).